Reading from the N-terminus, the 1167-residue chain is Pesticidal crystal protein Cry1Ja (1167 aa).

Belongs to the delta endotoxin family.

Promotes colloidosmotic lysis by binding to the midgut epithelial cells of many lepidopteran larvae. The sequence is that of Pesticidal crystal protein Cry1Ja (cry1Ja) from Bacillus thuringiensis.